We begin with the raw amino-acid sequence, 333 residues long: Gap junction alpha-4 protein (333 aa).

Topologically, residues 1 to 20 (MGDWGFLEKLLDQVQEHSTV) are cytoplasmic. The chain crosses the membrane as a helical span at residues 21-40 (VGKIWLTVLFIFRILILGLA). Over 41 to 76 (GESVWGDEQSDFECNTAQPGCTNVCYDQAFPISHIR) the chain is Extracellular. The chain crosses the membrane as a helical span at residues 77–99 (YWVLQFLFVSTPTLIYLGHVIYL). Residues 100–148 (SRREERLRQKEGELRALPSKDLHVERALAAIEHQMAKISVAEDGRLRIR) are Cytoplasmic-facing. Residues 149 to 171 (GALMGTYVVSVLCKSVLEAGFLY) traverse the membrane as a helical segment. The Extracellular portion of the chain corresponds to 172 to 208 (GQWRLYGWTMEPVFVCQRAPCPHIVDCYVSRPTEKTI). The helical transmembrane segment at 209 to 231 (FIIFMLVVGVISLVLNLLELVHL) threads the bilayer. Residues 232-333 (LCRCVSREIK…NSSASKKQYV (102 aa)) are Cytoplasmic-facing. Positions 292 to 333 (ANLTTEERLTSSRPPPFVNTAPQGGRKSPSRPNSSASKKQYV) are disordered. The segment covering 321–333 (SRPNSSASKKQYV) has biased composition (polar residues).

Belongs to the connexin family. Alpha-type (group II) subfamily. A connexon is composed of a hexamer of connexins. Highly expressed in lung.

It is found in the cell membrane. The protein localises to the cell junction. The protein resides in the gap junction. Functionally, one gap junction consists of a cluster of closely packed pairs of transmembrane channels, the connexons, through which materials of low MW diffuse from one cell to a neighboring cell. The chain is Gap junction alpha-4 protein (Gja4) from Mus musculus (Mouse).